We begin with the raw amino-acid sequence, 456 residues long: uncharacterized protein (456 aa).

Residues 2-60 (AMRKGKEYELNIEEIEFPSMGIAYHEGLKVYVKHGIPGQKVLARITTKKKDHAKGKIIE) enclose the TRAM domain. The [4Fe-4S] cluster site is built by Cys-73, Cys-79, Cys-82, and Cys-162. S-adenosyl-L-methionine is bound by residues Gln-288, Tyr-317, Glu-338, and Asp-383. The active-site Nucleophile is Cys-410.

This sequence belongs to the class I-like SAM-binding methyltransferase superfamily. RNA M5U methyltransferase family.

This is an uncharacterized protein from Clostridium tetani (strain Massachusetts / E88).